The primary structure comprises 689 residues: Glycine--tRNA ligase beta subunit (689 aa).

It belongs to the class-II aminoacyl-tRNA synthetase family. Tetramer of two alpha and two beta subunits.

The protein resides in the cytoplasm. It carries out the reaction tRNA(Gly) + glycine + ATP = glycyl-tRNA(Gly) + AMP + diphosphate. The protein is Glycine--tRNA ligase beta subunit of Salmonella paratyphi C (strain RKS4594).